A 49-amino-acid polypeptide reads, in one-letter code: uncharacterized protein (49 aa).

A helical membrane pass occupies residues 6-28 (IYPLTVFYFFAIEMSVFCYYNWF).

It localises to the membrane. This is an uncharacterized protein from Saccharomyces cerevisiae (strain ATCC 204508 / S288c) (Baker's yeast).